Consider the following 2167-residue polypeptide: GTPase-activating protein BEM2/IPL2 (2167 aa).

3 disordered regions span residues 1–209 (MKGL…NDNE), 243–305 (TNYN…ASAR), and 353–372 (NSSI…NNQA). Residues 12–51 (SSTASASSSSTSTSHKTTTASTASSSSPSSSSQTIRNSTS) show a composition bias toward low complexity. K27 participates in a covalent cross-link: Glycyl lysine isopeptide (Lys-Gly) (interchain with G-Cter in ubiquitin). Over residues 58–70 (HSHHHHGQGHSHH) the composition is skewed to basic residues. Positions 89–118 (KQYTSTSSSQVNLGMYHSDTNTRSSRSIAS) are enriched in polar residues. The residue at position 129 (S129) is a Phosphoserine. Residues 134–145 (SNSSSQKSNAQD) are compositionally biased toward polar residues. Low complexity-rich tracts occupy residues 160–177 (SLLP…SRCS) and 187–207 (NTSG…NNND). Residues 243–252 (TNYNSSMTAP) are compositionally biased toward polar residues. S283 is modified (phosphoserine). Residues 289-300 (SSSTTATNSGND) show a composition bias toward low complexity. Residues 592 to 859 (DITTLADEVH…MKLSVQHEPP (268 aa)) form the Ras-GEF domain. Phosphoserine occurs at positions 1012 and 1016. T1038 is subject to Phosphothreonine. 3 positions are modified to phosphoserine: S1046, S1054, and S1128. Residues 1771–1794 (ISGTHSDNDHSYNINKNTGQTPSL) show a composition bias toward polar residues. The disordered stretch occupies residues 1771–1828 (ISGTHSDNDHSYNINKNTGQTPSLGSVMESNNSARNRRDSRASFSTNRSSVVSNSSHN). Low complexity predominate over residues 1812-1828 (ASFSTNRSSVVSNSSHN). The 103-residue stretch at 1846-1948 (GFNTSSSNYS…WIKMIKASKR (103 aa)) folds into the PH domain. The region spanning 1967-2165 (VPLEDVCERE…DFIKNPNDYF (199 aa)) is the Rho-GAP domain.

Functionally, GTPase-activating protein (GAP) for RHO1 and RHO2. Involved in the control of cellular morphogenesis. Required for proper bud site selection and bud emergence. The protein is GTPase-activating protein BEM2/IPL2 (BEM2) of Saccharomyces cerevisiae (strain ATCC 204508 / S288c) (Baker's yeast).